Here is a 233-residue protein sequence, read N- to C-terminus: Large ribosomal subunit protein uL22m (233 aa).

The protein belongs to the universal ribosomal protein uL22 family. Component of the mitochondrial ribosome large subunit (39S) which comprises a 16S rRNA and about 50 distinct proteins.

The protein resides in the mitochondrion. This is Large ribosomal subunit protein uL22m (mRpL22) from Drosophila melanogaster (Fruit fly).